A 426-amino-acid chain; its full sequence is Glutamate-1-semialdehyde 2,1-aminomutase (426 aa).

Residue lysine 265 is modified to N6-(pyridoxal phosphate)lysine.

The protein belongs to the class-III pyridoxal-phosphate-dependent aminotransferase family. HemL subfamily. Homodimer. It depends on pyridoxal 5'-phosphate as a cofactor.

It localises to the cytoplasm. It carries out the reaction (S)-4-amino-5-oxopentanoate = 5-aminolevulinate. It functions in the pathway porphyrin-containing compound metabolism; protoporphyrin-IX biosynthesis; 5-aminolevulinate from L-glutamyl-tRNA(Glu): step 2/2. In Escherichia coli (strain SMS-3-5 / SECEC), this protein is Glutamate-1-semialdehyde 2,1-aminomutase.